The following is an 84-amino-acid chain: Large ribosomal subunit protein bL27 (84 aa).

The disordered stretch occupies residues Met-1–Arg-25.

It belongs to the bacterial ribosomal protein bL27 family.

The chain is Large ribosomal subunit protein bL27 from Desulfatibacillum aliphaticivorans.